The following is a 395-amino-acid chain: Phosphopentomutase (395 aa).

Positions 12, 289, 294, 330, 331, and 342 each coordinate Mn(2+).

Belongs to the phosphopentomutase family. The cofactor is Mn(2+).

Its subcellular location is the cytoplasm. The catalysed reaction is 2-deoxy-alpha-D-ribose 1-phosphate = 2-deoxy-D-ribose 5-phosphate. It catalyses the reaction alpha-D-ribose 1-phosphate = D-ribose 5-phosphate. Its pathway is carbohydrate degradation; 2-deoxy-D-ribose 1-phosphate degradation; D-glyceraldehyde 3-phosphate and acetaldehyde from 2-deoxy-alpha-D-ribose 1-phosphate: step 1/2. Isomerase that catalyzes the conversion of deoxy-ribose 1-phosphate (dRib-1-P) and ribose 1-phosphate (Rib-1-P) to deoxy-ribose 5-phosphate (dRib-5-P) and ribose 5-phosphate (Rib-5-P), respectively. In Levilactobacillus brevis (strain ATCC 367 / BCRC 12310 / CIP 105137 / JCM 1170 / LMG 11437 / NCIMB 947 / NCTC 947) (Lactobacillus brevis), this protein is Phosphopentomutase.